Consider the following 226-residue polypeptide: 2-C-methyl-D-erythritol 4-phosphate cytidylyltransferase (226 aa).

Belongs to the IspD/TarI cytidylyltransferase family. IspD subfamily.

It carries out the reaction 2-C-methyl-D-erythritol 4-phosphate + CTP + H(+) = 4-CDP-2-C-methyl-D-erythritol + diphosphate. Its pathway is isoprenoid biosynthesis; isopentenyl diphosphate biosynthesis via DXP pathway; isopentenyl diphosphate from 1-deoxy-D-xylulose 5-phosphate: step 2/6. Functionally, catalyzes the formation of 4-diphosphocytidyl-2-C-methyl-D-erythritol from CTP and 2-C-methyl-D-erythritol 4-phosphate (MEP). This Rhodococcus opacus (strain B4) protein is 2-C-methyl-D-erythritol 4-phosphate cytidylyltransferase.